Reading from the N-terminus, the 576-residue chain is CTP synthase (576 aa).

A Glutamine amidotransferase type-1 domain is found at 305–559; sequence QIALVGKYTH…LGLVAAAANI (255 aa). Catalysis depends on for GATase activity residues Cys404, His535, and Glu537.

It belongs to the CTP synthase family.

It catalyses the reaction UTP + L-glutamine + ATP + H2O = CTP + L-glutamate + ADP + phosphate + 2 H(+). Its pathway is pyrimidine metabolism; CTP biosynthesis via de novo pathway; CTP from UDP: step 2/2. In terms of biological role, catalyzes the ATP-dependent amination of UTP to CTP with either L-glutamine or ammonia as the source of nitrogen. This chain is CTP synthase (URA7), found in Eremothecium gossypii (strain ATCC 10895 / CBS 109.51 / FGSC 9923 / NRRL Y-1056) (Yeast).